The sequence spans 352 residues: Glycogen synthase kinase 3 (352 aa).

A Protein kinase domain is found at 20-310; it reads YTVERVAGQG…PLDALCHPFF (291 aa). ATP is bound by residues 26–34 and Lys-49; that span reads AGQGTFGTV. The active-site Proton acceptor is Asp-152.

Belongs to the protein kinase superfamily. CMGC Ser/Thr protein kinase family. GSK-3 subfamily. Inhibited by cyclin kinase 2 (CDK2) inhibitors, including GW8510.

The enzyme catalyses L-seryl-[tau protein] + ATP = O-phospho-L-seryl-[tau protein] + ADP + H(+). The catalysed reaction is L-threonyl-[tau protein] + ATP = O-phospho-L-threonyl-[tau protein] + ADP + H(+). This Trypanosoma brucei brucei (strain 927/4 GUTat10.1) protein is Glycogen synthase kinase 3.